Consider the following 434-residue polypeptide: MAKTDLARRVYNHTWKLDPIIRSLLDTDFYKLLMLQMIWGLYPRVDATFSLINRTSSVRLADEIDEGELRAQLDHARTLRFSKKEMIWLAGNTFYGRKQIFQPEFLAWLHDFHLPEYELRRKDGQYELHFHGPWTHTTMWEIPALAIINELRSRAAMKNLGPFSLDVLYARAKAKMWSKVERLRQLPDLKISDFGTRRRHSFLWQRWCVEALKEGIGSAFTGTSNVLLAMDTDLEALGTNAHELPMVLAALAKTDDELRSAPYRVLQDWNRYYGGNLLIVLPDAFGTAAFLRNAPDWVADWTGFRPDSAPPIEGGERIIEWWKSKGKDPREKLLIFSDALDVDTIEETYRHFEGRVRMGFGWGTNLTNDFAGCAPQSIDGLKAISLVCKVTDANGHPAVKLSDNPQKATGDPKEVARYLRFFGNEERVEQLVRV.

Residue His242 is modified to Phosphohistidine; by autocatalysis.

It belongs to the NAPRTase family. Transiently phosphorylated on a His residue during the reaction cycle. Phosphorylation strongly increases the affinity for substrates and increases the rate of nicotinate D-ribonucleotide production. Dephosphorylation regenerates the low-affinity form of the enzyme, leading to product release.

The catalysed reaction is nicotinate + 5-phospho-alpha-D-ribose 1-diphosphate + ATP + H2O = nicotinate beta-D-ribonucleotide + ADP + phosphate + diphosphate. Its pathway is cofactor biosynthesis; NAD(+) biosynthesis; nicotinate D-ribonucleotide from nicotinate: step 1/1. Its function is as follows. Catalyzes the synthesis of beta-nicotinate D-ribonucleotide from nicotinate and 5-phospho-D-ribose 1-phosphate at the expense of ATP. This Brucella canis (strain ATCC 23365 / NCTC 10854 / RM-666) protein is Nicotinate phosphoribosyltransferase.